A 332-amino-acid chain; its full sequence is Fructose-1,6-bisphosphatase class 1 (332 aa).

Residues E94, D116, L118, and D119 each contribute to the Mg(2+) site. Substrate-binding positions include 119 to 122 (DGSS), N211, Y239, 257 to 259 (YLY), and K269. A Mg(2+)-binding site is contributed by E275.

It belongs to the FBPase class 1 family. As to quaternary structure, homotetramer. Mg(2+) serves as cofactor.

The protein resides in the cytoplasm. The enzyme catalyses beta-D-fructose 1,6-bisphosphate + H2O = beta-D-fructose 6-phosphate + phosphate. Its pathway is carbohydrate biosynthesis; Calvin cycle. In Synechococcus sp. (strain JA-3-3Ab) (Cyanobacteria bacterium Yellowstone A-Prime), this protein is Fructose-1,6-bisphosphatase class 1.